The chain runs to 546 residues: MTTRYIFVTGGVVSSLGKGIAAASLAAILEARGLNVTIMKLDPYINVDPGTMSPTQHGEVFVTEDGAETDLDLGHYERFIRTKMNRRNNFTTGRIYEEVLRKERRGDYLGATIQVIPHITNAIKEKVIAGGEGHDVAIVEIGGTVGDIESLPFLESIRQLGVELGRDRTLFMHLTLVPFLGAAGEVKTKPTQHSVKELRSIGIAPDVLICRGDRAIPANERAKISLFCNVEERAVISLKDVDSIYKIPALLRSQGLDDLVVKRFGLECREADLSEWENVIYQEANPNGEVVIGMVGKYIELPDAYKSVNEALKHAGLKNRVSVSIKYIDSQTVEAKGDEVLQGLDGILVPGGFGERGVEGKILAAKYARENELPYFGICLGMQVALIEFARNVAGMTDAHSTEFNKATPFPVVGLITEWVDEEGNVEQRHEASDLGGTMRLGAQLCHLLEGSKAAQAYKGNTCVERHRHRYEVNNKYRERLEQAGLVFSGLSSDRKLVEMIELKDHPWFVAGQFHPEFTSTPRDGHPLFEGFVAAASAHQKRDLKK.

Positions 1–266 (MTTRYIFVTG…DDLVVKRFGL (266 aa)) are amidoligase domain. S14 serves as a coordination point for CTP. S14 serves as a coordination point for UTP. ATP contacts are provided by residues 15–20 (SLGKGI) and D72. Mg(2+) is bound by residues D72 and E140. CTP-binding positions include 147 to 149 (DIE), 187 to 192 (KTKPTQ), and K223. Residues 187–192 (KTKPTQ) and K223 each bind UTP. 239-241 (KDV) is a binding site for ATP. The Glutamine amidotransferase type-1 domain maps to 291–542 (VIGMVGKYIE…VAAASAHQKR (252 aa)). G352 provides a ligand contact to L-glutamine. The active-site Nucleophile; for glutamine hydrolysis is the C379. L-glutamine is bound by residues 380–383 (LGMQ), E403, and R470. Catalysis depends on residues H515 and E517.

It belongs to the CTP synthase family. As to quaternary structure, homotetramer.

The enzyme catalyses UTP + L-glutamine + ATP + H2O = CTP + L-glutamate + ADP + phosphate + 2 H(+). It catalyses the reaction L-glutamine + H2O = L-glutamate + NH4(+). The catalysed reaction is UTP + NH4(+) + ATP = CTP + ADP + phosphate + 2 H(+). It participates in pyrimidine metabolism; CTP biosynthesis via de novo pathway; CTP from UDP: step 2/2. Its activity is regulated as follows. Allosterically activated by GTP, when glutamine is the substrate; GTP has no effect on the reaction when ammonia is the substrate. The allosteric effector GTP functions by stabilizing the protein conformation that binds the tetrahedral intermediate(s) formed during glutamine hydrolysis. Inhibited by the product CTP, via allosteric rather than competitive inhibition. Catalyzes the ATP-dependent amination of UTP to CTP with either L-glutamine or ammonia as the source of nitrogen. Regulates intracellular CTP levels through interactions with the four ribonucleotide triphosphates. In Shewanella sp. (strain ANA-3), this protein is CTP synthase.